Here is a 440-residue protein sequence, read N- to C-terminus: Metacaspase-1 (440 aa).

A disordered region spans residues 1–134 (MFPGSGRKTY…NPQGFGQNSG (134 aa)). Pro residues predominate over residues 14–51 (APPPGPPNGYQYGPPPGAQGQYPPPQGYPPQGYPPQGY). Over residues 52–81 (PPQGYAPQGYPPQGYAPQGYAPQGYQQQGG) the composition is skewed to low complexity. Residues 82 to 94 (QQQGGQQQGGQQQ) show a composition bias toward gly residues. Positions 98 to 110 (RQTYATQEAQNFG) are enriched in polar residues. Active-site residues include H230 and C286.

This sequence belongs to the peptidase C14B family.

Functionally, involved in cell death (apoptosis). The protein is Metacaspase-1 (MCA1) of Debaryomyces hansenii (strain ATCC 36239 / CBS 767 / BCRC 21394 / JCM 1990 / NBRC 0083 / IGC 2968) (Yeast).